The sequence spans 347 residues: NADH-ubiquinone oxidoreductase chain 2 (347 aa).

11 helical membrane-spanning segments follow: residues Met-1–Met-21, His-25–Met-45, Phe-60–Phe-80, Ile-89–Ser-109, Phe-111–Leu-131, Ile-149–Gly-169, Ile-178–Pro-198, Thr-201–Leu-221, Ser-242–Pro-262, Asp-274–Met-294, and Met-323–Met-343.

The protein belongs to the complex I subunit 2 family. Core subunit of respiratory chain NADH dehydrogenase (Complex I) which is composed of 45 different subunits. Interacts with TMEM242.

It localises to the mitochondrion inner membrane. It carries out the reaction a ubiquinone + NADH + 5 H(+)(in) = a ubiquinol + NAD(+) + 4 H(+)(out). Functionally, core subunit of the mitochondrial membrane respiratory chain NADH dehydrogenase (Complex I) which catalyzes electron transfer from NADH through the respiratory chain, using ubiquinone as an electron acceptor. Essential for the catalytic activity and assembly of complex I. In Ceratotherium simum (White rhinoceros), this protein is NADH-ubiquinone oxidoreductase chain 2.